We begin with the raw amino-acid sequence, 1621 residues long: MEGCMGEESFQMWELNRRLEAYLARVKALEEQNELLSAELGGLRAQSADTSWRAHADDELAALRALVDQRWREKHAAEVARDNLAEELEGVAGRCQQLRLARERTTEEVARNRRAVEAEKCARAWLSSQVAELERELEALRVAHEEERVGLNAQAACAPRCPAPPRGPPAPAPEVEELARRLGEAWRGAVRGYQERVAHMETSLGQARERLGRAVQGAREGRLELQQLQAERGGLLERRAALEQRLEGRWQERLRATEKFQLAVEALEQEKQGLQSQIAQVLEGRQQLAHLKMSLSLEVATYRTLLEAENSRLQTPGGGSKTSLSFQDPKLELQFPRTPEGRRLGSLLPVLSPTSLPSPLPATLETPVPAFLKNQEFLQARTPTLASTPIPPTPQAPSPAVDAEIRAQDAPLSLLQTQGGRKQAPEPLRAEARVAIPASVLPGPEEPGGQRQEASTGQSPEDHASLAPPLSPDHSSLEAKDGESGGSRVFSICRGEGEGQIWGLVEKETAIEGKVVSSLQQEIWEEEDLNRKEIQDSQVPLEKETLKSLGEEIQESLKTLENQSHETLERENQECPRSLEEDLETLKSLEKENKELLKDVEVVRPLEKEAVGQLKPTGKEDTQTLQSLQKENQELMKSLEGNLETFLFPGTENQELVSSLQENLESLTALEKENQEPLRSPEVGDEEALRPLTKENQEPLRSLEDENKEAFRSLEKENQEPLKTLEEEDQSIVRPLETENHKSLRSLEEQDQETLRTLEKETQQRRRSLGEQDQMTLRPPEKVDLEPLKSLDQEIARPLENENQEFLKSLKEESVEAVKSLETEILESLKSAGQENLETLKSPETQAPLWTPEEINQGAMNPLEKEIQEPLESVEVNQETFRLLEEENQESLRSLGAWNLENLRSPEEVDKESQRNLEEEENLGKGEYQESLRSLEEEGQELPQSADVQRWEDTVEKDQELAQESPPGMAGVENEDEAELNLREQDGFTGKEEVVEQGELNATEEVWIPGEGHPESPEPKEQRGLVEGASVKGGAEGLQDPEGQSQQVGAPGLQAPQGLPEAIEPLVEDDVAPGGDQASPEVMLGSEPAMGESAAGAEPGPGQGVGGLGDPGHLTREEVMEPPLEEESLEAKRVQGLEGPRKDLEEAGGLGTEFSELPGKSRDPWEPPREGREESEAEAPRGAEEAFPAETLGHTGSDAPSPWPLGSEEAEEDVPPVLVSPSPTYTPILEDAPGPQPQAEGSQEASWGVQGRAEALGKVESEQEELGSGEIPEGPQEEGEESREESEEDELGETLPDSTPLGFYLRSPTSPRWDPTGEQRPPPQGETGKEGWDPAVLASEGLEAPPSEKEEGEEGEEECGRDSDLSEEFEDLGTEAPFLPGVPGEVAEPLGQVPQLLLDPAAWDRDGESDGFADEEESGEEGEEDQEEGREPGAGRWGPGSSVGSLQALSSSQRGEFLESDSVSVSVPWDDSLRGAVAGAPKTALETESQDSAEPSGSEEESDPVSLEREDKVPGPLEIPSGMEDAGPGADIIGVNGQGPNLEGKSQHVNGGVMNGLEQSEEVGQGMPLVSEGDRGSPFQEEEGSALKTSWAGAPVHLGQGQFLKFTQREGDRESWSSGED.

At M1 the chain carries N-acetylmethionine. A head region spans residues 1 to 7 (MEGCMGE). Residues 8-43 (ESFQMWELNRRLEAYLARVKALEEQNELLSAELGGL) are coil 1A. Positions 8-313 (ESFQMWELNR…TLLEAENSRL (306 aa)) constitute an IF rod domain. Positions 44 to 55 (RAQSADTSWRAH) are linker 1. The coil 1B stretch occupies residues 56–151 (ADDELAALRA…VAHEEERVGL (96 aa)). The interval 152-173 (NAQAACAPRCPAPPRGPPAPAP) is linker 12. A coil 2A region spans residues 174-192 (EVEELARRLGEAWRGAVRG). The segment at 193 to 195 (YQE) is linker 2. The coil 2B stretch occupies residues 196 to 313 (RVAHMETSLG…TLLEAENSRL (118 aa)). S311 is subject to Phosphoserine. A tail region spans residues 314-1621 (QTPGGGSKTS…DRESWSSGED (1308 aa)). A Phosphothreonine modification is found at T315. The residue at position 325 (S325) is a Phosphoserine. T338 is subject to Phosphothreonine. Phosphoserine is present on residues S355 and S358. T388 carries the post-translational modification Phosphothreonine. S398, S471, S476, S548, S564, S578, S588, S638, S680, S702, S746, and S768 each carry phosphoserine. Positions 439-490 (SVLPGPEEPGGQRQEASTGQSPEDHASLAPPLSPDHSSLEAKDGESGGSRVF) are disordered. The disordered stretch occupies residues 670-788 (LEKENQEPLR…PPEKVDLEPL (119 aa)). Basic and acidic residues-rich tracts occupy residues 687–725 (EALR…LKTL), 736–770 (LETE…RSLG), and 779–788 (PPEKVDLEPL). The residue at position 790 (S790) is a Phosphoserine. Residue K811 forms a Glycyl lysine isopeptide (Lys-Gly) (interchain with G-Cter in SUMO1); alternate linkage. Residue K811 forms a Glycyl lysine isopeptide (Lys-Gly) (interchain with G-Cter in SUMO2); alternate linkage. Residues S820, S831, and S842 each carry the phosphoserine modification. A Phosphothreonine modification is found at T851. A phosphoserine mark is found at S894, S905, S913, and S934. The disordered stretch occupies residues 895–1593 (LGAWNLENLR…GSALKTSWAG (699 aa)). Basic and acidic residues-rich tracts occupy residues 904 to 936 (RSPE…RSLE), 949 to 960 (QRWEDTVEKDQE), 980 to 994 (LNLR…KEEV), and 1012 to 1024 (GHPE…EQRG). S1016 carries the post-translational modification Phosphoserine. Low complexity predominate over residues 1085-1098 (GSEPAMGESAAGAE). Gly residues predominate over residues 1099–1110 (PGPGQGVGGLGD). Basic and acidic residues-rich tracts occupy residues 1129-1145 (LEAK…KDLE) and 1159-1184 (GKSR…RGAE). Residues S1261, S1282, S1286, S1310, S1347, S1409, S1418, and S1452 each carry the phosphoserine modification. Acidic residues predominate over residues 1275-1292 (PQEEGEESREESEEDELG). Residues 1409–1428 (SDGFADEEESGEEGEEDQEE) are compositionally biased toward acidic residues. Low complexity-rich tracts occupy residues 1440–1453 (GSSV…SSSQ) and 1460–1470 (SDSVSVSVPWD). Residues 1486–1495 (ETESQDSAEP) show a composition bias toward polar residues. 5 positions are modified to phosphoserine: S1496, S1498, S1577, S1617, and S1618.

This sequence belongs to the intermediate filament family. Forms homodimers and homotetramers in vitro. In mixtures with other intermediate filament proteins such as vimentin and alpha-internexin, tis protein preferentially forms heterodimers which can assemble to form intermediate filaments if nestin does not exceed 25%. Interacts with FHOD3. Post-translationally, constitutively phosphorylated. This increases during mitosis when the cytoplasmic intermediate filament network is reorganized. CNS stem cells.

In terms of biological role, required for brain and eye development. Promotes the disassembly of phosphorylated vimentin intermediate filaments (IF) during mitosis and may play a role in the trafficking and distribution of IF proteins and other cellular factors to daughter cells during progenitor cell division. Required for survival, renewal and mitogen-stimulated proliferation of neural progenitor cells. The chain is Nestin (NES) from Homo sapiens (Human).